A 249-amino-acid chain; its full sequence is Low affinity immunoglobulin gamma Fc region receptor III-A (249 aa).

The signal sequence occupies residues 1–20 (MWQLLLPTALVLTAFSGIQA). Residues 21-203 (GLQKAVVNLD…SPSMFPPWHQ (183 aa)) lie on the Extracellular side of the membrane. 2 consecutive Ig-like C2-type domains span residues 22–102 (LQKA…VQLE) and 119–188 (EGDP…FRIS). Intrachain disulfides connect cysteine 46–cysteine 88 and cysteine 127–cysteine 171. N-linked (GlcNAc...) asparagine glycosylation is found at asparagine 62, asparagine 164, and asparagine 179. A helical membrane pass occupies residues 204-224 (ITFCLLIGLLFAIDTVLYFSV). Residues 225 to 249 (RRGLQSPVADYEEPKIQWSKEPQDK) lie on the Cytoplasmic side of the membrane. Phosphotyrosine is present on tyrosine 235.

Forms a heterooligomeric complex with ITAM-containing signaling subunits FCER1G. Interacts (via transmembrane domain) with signaling subunits; this interaction is a prerequisite for receptor complex expression on the cell surface and intracellular signal transduction. Binds the Fc region of antigen-complexed IgG. Post-translationally, N-glycosylated. Phosphorylated following receptor ligation. In terms of tissue distribution, detected on myeloid cells, peripheral blood monocytes, splenic and bone marrow dendritic cells, and thioglycollate-elicited macrophages and neutrophils but absent from lymphoid populations with no expression observed on T cells, B cells, NK cells or other granulocytes (at protein level). Expressed in peripheral blood leukocytes, spleen, liver, thymus and small intestine. Expressed in splenic dendritic cell subsets (at protein level).

The protein localises to the cell membrane. In terms of biological role, receptor for the invariable Fc fragment of immunoglobulin gamma (IgG). Binds with intermediate affinity to both IgG2a and IgG2b. Can bind to IgG2a and IgG2b monomers. Does not display binding to IgG1 or IgG3. Recognizes neutralizing virus-specific IgGs displayed on the cell surface of infected cells and triggers antibody-dependent cellular cytotoxicity (ADCC). Confers protection to lethal influenza virus infection. On splenic dendritic cells, uptakes antigen immune complexes and efficiently divert them into MHC class I and II antigen presentation pathways to provide for superior priming of CD4-positive and CD8-positive T cell immune responses. Mediates neutrophil activation by IgG complexes redundantly with FCGR2A. Plays a role in promoting bone resorption by enhancing osteoclast differentiation following binding to IgG2a. Also acts as a receptor for the Fc region of immunoglobulin epsilon (IgE). Binds with low affinity to both the a and b allotypes of IgE. Has also been shown to bind to IgE allotype a only but not to allotype b. Binds aggregated IgE but not the monomeric form and bound monomeric IgG is readily displaced by IgE complexes. Binding to IgE promotes macrophage-mediated phagocytosis, antigen presentation to T cells, production of pro-inflammatory cytokines and the late phase of cutaneous allergic reactions. Mediates enhanced ADCC in response to afucosylated IgGs. In Mus musculus (Mouse), this protein is Low affinity immunoglobulin gamma Fc region receptor III-A.